Consider the following 582-residue polypeptide: BTB/POZ domain and ankyrin repeat-containing protein NPR1 (582 aa).

The segment covering 1–18 has biased composition (polar residues); the sequence is MEPPTSHVTNAFSDSDSA. Residues 1 to 25 are disordered; the sequence is MEPPTSHVTNAFSDSDSASVEEGGA. One can recognise a BTB domain in the interval 55-140; that stretch reads ADARIAVPGG…VLDYLYSGRV (86 aa). A C2HC NPR-type zinc finger spans residues 147-161; that stretch reads ACLCVDEDCAHVGCH. Zn(2+) is bound by residues cysteine 150, cysteine 155, histidine 157, and cysteine 160. ANK repeat units follow at residues 229–258, 269–299, 301–328, and 332–361; these read RSNL…SLGL, KHVR…NLDD, FALH…DVNH, and RGYT…RPAD. The tract at residues 391 to 526 is salicylic acid-binding core (SBC); that stretch reads PSPKDRLCIE…VLDKIMDDET (136 aa). Arginine 436 provides a ligand contact to salicylate. Residues 551–582 are disordered; that stretch reads QKAFHEDKEENDRSGLSSSSSSTSIGAIRPRR. Residues 553 to 563 show a composition bias toward basic and acidic residues; the sequence is AFHEDKEENDR. A compositionally biased stretch (low complexity) spans 564 to 574; that stretch reads SGLSSSSSSTS.

Belongs to the plant 'ANKYRIN-BTB/POZ' family. 'NPR1-like' subfamily. In terms of assembly, oligomer in an uninduced state; disulfide-linked. Forms activated monomer upon changes in cellular redox potential. Interacts with TGA2.1, TGA2.2, TGA2.3, LG2, TGAL1 and TGAL4. Interacts with NRR, RH1, RH2 and RH3.

Its subcellular location is the cytoplasm. The protein resides in the nucleus. The protein localises to the nuclear body. It functions in the pathway protein modification; protein ubiquitination. Functionally, salicylic acid (SA)-binding substrate-specific adapter of an E3 ubiquitin-protein ligase complex (CUL3-RBX1-BTB) which mediates the ubiquitination and subsequent proteasomal degradation of target proteins. Transcription cofactor that represses gene expression in the absence of salicylic acid (SA), when attached to negative cis-elements (W-box) with WRKY transcription factors, but stimulates gene expression upon activation by SA, when sumoylated and attached to positive cis-elements (as-1) with TGA transcription factors, thus confering immunity through a series of gene regulations ending in a significant increase in antimicrobial and defense genes expression. Key positive factor of disease resistance. Plays an essential role in benzothiadiazole (BTH)-induced resistance to the blast fungus disease caused by Magnaporthe oryzae. Involved in defense response against the bacterial blight disease caused by Xanthomonas oryzae pv. oryzae (Xoo). Over-expression of NPR1/NH1 confers disease resistance to Xoo, but also enhances herbivore susceptibility. Functions as a transcriptional coactivator of TGA2.1 and LG2 in vitro. Involved in defense response against herbivore. Plants silencing NPR1/NH1 have increased herbivore-induced trypsin proteinase inhibitors and volatiles, which reduces the performance of the striped stem borer (SSB) Chilo suppressalis. This is BTB/POZ domain and ankyrin repeat-containing protein NPR1 from Oryza sativa subsp. japonica (Rice).